Consider the following 334-residue polypeptide: N-acetylmuramoyl-L-alanine amidase sle1 (334 aa).

Positions 1–25 are cleaved as a signal peptide; it reads MQKKVIAAIIGTSAISAVAATQANA. The region spanning 27 to 70 is the LysM 1 domain; it reads TTHTVKPGESVWAISNKYGISIAKLKSLNNLTSNLIFPNQVLKV. A compositionally biased stretch (low complexity) spans 71–86; it reads SGSSNSTSNSSRPSTN. The interval 71–90 is disordered; sequence SGSSNSTSNSSRPSTNSGGG. A LysM 2 domain is found at 91–134; sequence SYYTVQAGDSLSLIASKYGTTYQNIMRLNGLNNFFIYPGQKLKV. Residues 137–156 are disordered; the sequence is TASSSNSTSNSSRPSTNSSG. The LysM 3 domain maps to 158–201; the sequence is SYYTVQAGDSLSLIASKYGTTYQNIMRLNGLNNFFIYPGQKLKV. Positions 210 to 334 constitute a Peptidase C51 domain; sequence GSTTTTNRGY…YQVNNYRYIH (125 aa).

The protein resides in the secreted. Its subcellular location is the cell surface. The catalysed reaction is Hydrolyzes the link between N-acetylmuramoyl residues and L-amino acid residues in certain cell-wall glycopeptides.. Functionally, peptidoglycan hydrolase involved in the splitting of the septum during cell division. This Staphylococcus aureus (strain MRSA252) protein is N-acetylmuramoyl-L-alanine amidase sle1 (sle1).